The sequence spans 417 residues: Gamma-glutamyl phosphate reductase (417 aa).

The protein belongs to the gamma-glutamyl phosphate reductase family.

The protein localises to the cytoplasm. The catalysed reaction is L-glutamate 5-semialdehyde + phosphate + NADP(+) = L-glutamyl 5-phosphate + NADPH + H(+). It participates in amino-acid biosynthesis; L-proline biosynthesis; L-glutamate 5-semialdehyde from L-glutamate: step 2/2. Catalyzes the NADPH-dependent reduction of L-glutamate 5-phosphate into L-glutamate 5-semialdehyde and phosphate. The product spontaneously undergoes cyclization to form 1-pyrroline-5-carboxylate. The chain is Gamma-glutamyl phosphate reductase from Heliobacterium modesticaldum (strain ATCC 51547 / Ice1).